A 940-amino-acid chain; its full sequence is Isoleucine--tRNA ligase (940 aa).

Positions 58–68 match the 'HIGH' region motif; sequence PYANGDIHIGH. E564 contributes to the L-isoleucyl-5'-AMP binding site. Positions 605–609 match the 'KMSKS' region motif; it reads KMSKS. K608 lines the ATP pocket. Zn(2+)-binding residues include C903, C906, C923, and C926.

It belongs to the class-I aminoacyl-tRNA synthetase family. IleS type 1 subfamily. As to quaternary structure, monomer. Requires Zn(2+) as cofactor.

It localises to the cytoplasm. The enzyme catalyses tRNA(Ile) + L-isoleucine + ATP = L-isoleucyl-tRNA(Ile) + AMP + diphosphate. Catalyzes the attachment of isoleucine to tRNA(Ile). As IleRS can inadvertently accommodate and process structurally similar amino acids such as valine, to avoid such errors it has two additional distinct tRNA(Ile)-dependent editing activities. One activity is designated as 'pretransfer' editing and involves the hydrolysis of activated Val-AMP. The other activity is designated 'posttransfer' editing and involves deacylation of mischarged Val-tRNA(Ile). This chain is Isoleucine--tRNA ligase, found in Shewanella halifaxensis (strain HAW-EB4).